A 523-amino-acid polypeptide reads, in one-letter code: Melanoma-associated antigen E2 (523 aa).

2 MAGE domains span residues 88–288 (LEDR…YNKA) and 311–502 (MNDK…YREA).

The sequence is that of Melanoma-associated antigen E2 (MAGEE2) from Homo sapiens (Human).